The chain runs to 1013 residues: Ephrin type-B receptor 6 (1013 aa).

An N-terminal signal peptide occupies residues 1 to 31 (MASENTAGSGSRVAGMVYSLWLLVLGPSVLA). Residues 32–590 (LEEVLLDTTG…LPEKLSLVIG (559 aa)) are Extracellular-facing. Positions 33-231 (EEVLLDTTGE…FSYTCPSVLR (199 aa)) constitute an Eph LBD domain. Fibronectin type-III domains are found at residues 363–478 (PPSA…TSHE) and 479–574 (VPSA…TLPQ). Asn472 carries an N-linked (GlcNAc...) asparagine glycan. Residues 591 to 611 (SILGALAFLLLAAITVLAVIF) form a helical membrane-spanning segment. Over 612–1013 (QRKRRGTGYT…HLRQPGSVEV (402 aa)) the chain is Cytoplasmic. One can recognise a Protein kinase domain in the interval 662 to 911 (IKIEEVIGAG…QLVAAFDKMI (250 aa)). An ATP-binding site is contributed by 668–676 (IGAGSFGEV). The SAM domain maps to 940–1004 (PCLDSPQAWL…LHNIQLLQQH (65 aa)). Residues 1011-1013 (VEV) carry the PDZ-binding motif.

Belongs to the protein kinase superfamily. Tyr protein kinase family. Ephrin receptor subfamily. In terms of assembly, interacts with CBL and EPHB1. Interacts with FYN; this interaction takes place in a ligand-independent manner. In terms of processing, ligand-binding increases phosphorylation on tyrosine residues. Phosphorylation on tyrosine residues is mediated by transphosphorylation by the catalytically active EPHB1 in a ligand-independent manner. Tyrosine phosphorylation of the receptor may act as a switch on the functional transition from cell adhesion/attraction to de-adhesion/repulsion.

Its subcellular location is the membrane. Its function is as follows. Kinase-defective receptor for members of the ephrin-B family. Binds to ephrin-B1 and ephrin-B2. Modulates cell adhesion and migration by exerting both positive and negative effects upon stimulation with ephrin-B2. Inhibits JNK activation, T-cell receptor-induced IL-2 secretion and CD25 expression upon stimulation with ephrin-B2. In Rattus norvegicus (Rat), this protein is Ephrin type-B receptor 6 (Ephb6).